A 104-amino-acid polypeptide reads, in one-letter code: Alpha-amylase inhibitor HOE-467A (104 aa).

The first 30 residues, 1-30, serve as a signal peptide directing secretion; that stretch reads MRVRALRLAALVGAGAALALSPLAAGPASA. 2 cysteine pairs are disulfide-bonded: Cys-41–Cys-57 and Cys-75–Cys-103.

Its function is as follows. Inhibits mammalian alpha-amylases specifically but has no action on plant and microbial alpha-amylases. Forms a tight stoichiometric 1:1 complex with alpha-amylase. The chain is Alpha-amylase inhibitor HOE-467A from Streptomyces tendae.